The chain runs to 464 residues: Argininosuccinate lyase (464 aa).

It belongs to the lyase 1 family. Argininosuccinate lyase subfamily.

It localises to the cytoplasm. It catalyses the reaction 2-(N(omega)-L-arginino)succinate = fumarate + L-arginine. The protein operates within amino-acid biosynthesis; L-arginine biosynthesis; L-arginine from L-ornithine and carbamoyl phosphate: step 3/3. This is Argininosuccinate lyase from Pseudomonas aeruginosa (strain LESB58).